The following is a 1019-amino-acid chain: Probable LRR receptor-like serine/threonine-protein kinase At1g29720 (1019 aa).

Residues 1-19 (MSIILWSFFLFFTIILSSL) form the signal peptide. Residues 20 to 615 (TNITTLASFS…EKTKHHIKYP (596 aa)) are Extracellular-facing. N-linked (GlcNAc...) asparagine glycans are attached at residues asparagine 21, asparagine 79, and asparagine 90. LRR repeat units follow at residues 93 to 117 (ICRI…LTKL), 118 to 141 (PYLK…WAKM), 143 to 165 (YLTS…LQNF), 166 to 189 (KNLT…LGNL), 190 to 212 (TSLT…TLAR), 214 to 236 (VNLE…YIGN), 237 to 261 (WTRL…VVRL), 263 to 283 (NLLE…NLSS), 284 to 307 (KGLK…IWNL), 308 to 330 (TDLK…VQNP), 332 to 351 (KNIY…GGLL), 352 to 374 (NSQS…QKGS), and 375 to 398 (TINT…AVPA). Asparagine 153, asparagine 167, and asparagine 188 each carry an N-linked (GlcNAc...) asparagine glycan. Residues asparagine 225 and asparagine 236 are each glycosylated (N-linked (GlcNAc...) asparagine). N-linked (GlcNAc...) asparagine glycans are attached at residues asparagine 280 and asparagine 306. Residues asparagine 363, asparagine 387, asparagine 469, and asparagine 558 are each glycosylated (N-linked (GlcNAc...) asparagine). A helical transmembrane segment spans residues 616–636 (LILGASGALVTIVLLAVGIYA). The Cytoplasmic segment spans residues 637–1019 (RGIYRRDNNR…STVENSSSSL (383 aa)). Positions 673–946 (FDQANKLGEG…EAVKMLEGEI (274 aa)) constitute a Protein kinase domain. Residues 679–687 (LGEGGFGSV) and lysine 701 contribute to the ATP site. At tyrosine 746 the chain carries Phosphotyrosine. Catalysis depends on aspartate 797, which acts as the Proton acceptor. The residue at position 830 (serine 830) is a Phosphoserine. Phosphothreonine occurs at positions 831 and 836. Residue tyrosine 844 is modified to Phosphotyrosine.

Belongs to the protein kinase superfamily. Ser/Thr protein kinase family.

Its subcellular location is the cell membrane. The catalysed reaction is L-seryl-[protein] + ATP = O-phospho-L-seryl-[protein] + ADP + H(+). It carries out the reaction L-threonyl-[protein] + ATP = O-phospho-L-threonyl-[protein] + ADP + H(+). This is Probable LRR receptor-like serine/threonine-protein kinase At1g29720 (RFK1) from Arabidopsis thaliana (Mouse-ear cress).